The primary structure comprises 454 residues: F-box/WD repeat-containing protein 2 (454 aa).

The F-box domain maps to 54–101 (RDFLKLLPLELSFYLLKWLDPQTLLTCCLVSKQWNKVISACTEVWQTA). 7 WD repeats span residues 139–175 (FETSSLIGHSARVYALYYKDGLLCTGSDDLSAKLWDV), 179–213 (QCVYGIQTHTCAAVKFDEQKLVTGSFDNTVACWEW), 217–255 (ARTQHFRGHTGAVFSVDYNDELDILVSGSADFTVKVWAL), 259–306 (TCLN…IWPI), 313–352 (KCLKTLSVSEDRSICLQPRLHFDGKYIVCSSALGLYQWDF), 364–403 (PEIANLALLGFGDIFALLFDNRYLYIMDLRTESLISRWPL), and 410–452 (KRGS…LWKE). K298 is subject to N6-acetyllysine.

As to quaternary structure, directly interacts with SKP1 and CUL1.

In terms of biological role, substrate-recognition component of the SCF (SKP1-CUL1-F-box protein)-type E3 ubiquitin ligase complex. This chain is F-box/WD repeat-containing protein 2 (FBXW2), found in Homo sapiens (Human).